A 201-amino-acid chain; its full sequence is ATP-dependent Clp protease proteolytic subunit (201 aa).

Serine 98 acts as the Nucleophile in catalysis. The active site involves histidine 123.

The protein belongs to the peptidase S14 family. As to quaternary structure, fourteen ClpP subunits assemble into 2 heptameric rings which stack back to back to give a disk-like structure with a central cavity, resembling the structure of eukaryotic proteasomes.

It is found in the cytoplasm. The enzyme catalyses Hydrolysis of proteins to small peptides in the presence of ATP and magnesium. alpha-casein is the usual test substrate. In the absence of ATP, only oligopeptides shorter than five residues are hydrolyzed (such as succinyl-Leu-Tyr-|-NHMec, and Leu-Tyr-Leu-|-Tyr-Trp, in which cleavage of the -Tyr-|-Leu- and -Tyr-|-Trp bonds also occurs).. Functionally, cleaves peptides in various proteins in a process that requires ATP hydrolysis. Has a chymotrypsin-like activity. Plays a major role in the degradation of misfolded proteins. In Desulfatibacillum aliphaticivorans, this protein is ATP-dependent Clp protease proteolytic subunit.